The following is a 263-amino-acid chain: MTRFVGCIDLHDGKVKQIVGGTLSSKPDGEAPVTNFVSDKSPSHYAHLYASNDVQGSHVIRLGQSNDEAALMALQAAPGFLQLGGGVTKDNCQYWLQWASKVIVTSALFDSDGSFQLQRLREISGLCGRARLVVDLSCRRASDGASWTVMMNKWQTPTTLALNEETLALLSEYCSEFLIHAADVEGLCRGIDEELVAQLGLWAAQLRGDVRVVYAGGANSVADLGLVKRLSGGRVDLTYGSALDIFGGSLVRFQDCCAWNRQQ.

The protein belongs to the HisA/HisF family.

It localises to the cytoplasm. It carries out the reaction 1-(5-phospho-beta-D-ribosyl)-5-[(5-phospho-beta-D-ribosylamino)methylideneamino]imidazole-4-carboxamide = 5-[(5-phospho-1-deoxy-D-ribulos-1-ylimino)methylamino]-1-(5-phospho-beta-D-ribosyl)imidazole-4-carboxamide. Its pathway is amino-acid biosynthesis; L-histidine biosynthesis; L-histidine from 5-phospho-alpha-D-ribose 1-diphosphate: step 4/9. The chain is 1-(5-phosphoribosyl)-5-[(5-phosphoribosylamino)methylideneamino] imidazole-4-carboxamide isomerase (HIS6) from Eremothecium gossypii (strain ATCC 10895 / CBS 109.51 / FGSC 9923 / NRRL Y-1056) (Yeast).